A 626-amino-acid chain; its full sequence is Probable potassium transport system protein Kup (626 aa).

Transmembrane regions (helical) follow at residues 8 to 28 (VALP…IGTS), 44 to 64 (ISEA…TLSI), 102 to 122 (IYLI…GIIT), 139 to 159 (PAFD…LFMV), 171 to 191 (FGPI…YSII), 196 to 216 (ILWF…PFVA), 217 to 237 (FVAM…YADM), 249 to 269 (WFIV…ALLL), 281 to 301 (LLVP…AAVI), 339 to 359 (IYVP…IILF), 377 to 397 (MLCV…WPWW), 399 to 419 (VTLF…STSL), and 421 to 441 (ILSG…ILMT).

This sequence belongs to the HAK/KUP transporter (TC 2.A.72) family.

Its subcellular location is the cell inner membrane. The catalysed reaction is K(+)(in) + H(+)(in) = K(+)(out) + H(+)(out). Functionally, transport of potassium into the cell. Likely operates as a K(+):H(+) symporter. This Acinetobacter baylyi (strain ATCC 33305 / BD413 / ADP1) protein is Probable potassium transport system protein Kup.